The sequence spans 325 residues: Forkhead box protein B1 (325 aa).

Residues 12–103 constitute a DNA-binding region (fork-head); it reads QKPPYSYISL…GDMFENGSFL (92 aa). Positions 284-309 are enriched in low complexity; it reads LSNSPPSLSPTSSQTATSQSSPATPS. A disordered region spans residues 284–325; it reads LSNSPPSLSPTSSQTATSQSSPATPSETLTSPASALHSVAVH.

It localises to the nucleus. Its function is as follows. Transcription factor expressed by neural progenitor cells in specific regions of the embryonic neuroepithelium. Essential for the mammillary nuclei maintenance. Negatively regulates the proliferation of oligodendrocyte progenitors and promotes oligodendrocyte maturation. Also expressed in mammary glands, plays a role in lactation, controls development of mammary glands and the inferior colliculi of the midbrain in the central nervous system that regulates the milk-ejection reflex. The chain is Forkhead box protein B1 (FOXB1) from Homo sapiens (Human).